Here is a 258-residue protein sequence, read N- to C-terminus: Acyl-[acyl-carrier-protein]--UDP-N-acetylglucosamine O-acyltransferase (258 aa).

The protein belongs to the transferase hexapeptide repeat family. LpxA subfamily. Homotrimer.

The protein resides in the cytoplasm. The catalysed reaction is a (3R)-hydroxyacyl-[ACP] + UDP-N-acetyl-alpha-D-glucosamine = a UDP-3-O-[(3R)-3-hydroxyacyl]-N-acetyl-alpha-D-glucosamine + holo-[ACP]. Its pathway is glycolipid biosynthesis; lipid IV(A) biosynthesis; lipid IV(A) from (3R)-3-hydroxytetradecanoyl-[acyl-carrier-protein] and UDP-N-acetyl-alpha-D-glucosamine: step 1/6. Its function is as follows. Involved in the biosynthesis of lipid A, a phosphorylated glycolipid that anchors the lipopolysaccharide to the outer membrane of the cell. The polypeptide is Acyl-[acyl-carrier-protein]--UDP-N-acetylglucosamine O-acyltransferase (Pseudomonas syringae pv. syringae (strain B728a)).